The chain runs to 1512 residues: DNA polymerase (1512 aa).

The protein belongs to the DNA polymerase type-B family.

It is found in the host nucleus. The catalysed reaction is DNA(n) + a 2'-deoxyribonucleoside 5'-triphosphate = DNA(n+1) + diphosphate. The sequence is that of DNA polymerase (57/58) from Ictalurid herpesvirus 1 (strain Auburn) (IcHV-1).